Here is a 33-residue protein sequence, read N- to C-terminus: Mytimycin (33 aa).

Its subcellular location is the secreted. Has antifungal activity against N.crassa and F.culmorum. The protein is Mytimycin of Mytilus edulis (Blue mussel).